We begin with the raw amino-acid sequence, 278 residues long: HTH-type transcriptional activator RhaS (278 aa).

Residues 174–272 (NQLMAWLEDH…NWSPRDIRQG (99 aa)) form the HTH araC/xylS-type domain. 2 consecutive DNA-binding regions (H-T-H motif) follow at residues 191-212 (EAVA…KQHT) and 239-262 (VTEI…RREF).

As to quaternary structure, binds DNA as a dimer.

The protein resides in the cytoplasm. Functionally, activates expression of the rhaBAD and rhaT operons. This Salmonella enteritidis PT4 (strain P125109) protein is HTH-type transcriptional activator RhaS.